A 507-amino-acid chain; its full sequence is MDVPAFRERLLRLAPKDPLVLAVSGGGDSVALALLVKEAGRQAVVAHLDHGLRPESPLDQAFVRALAERLGFPFFTERVEVARIAQARGENLEAVAREVRYAFLHRVAREVGARAILTAHTLDDQAETVLLQLLQGTARATGIREREGIVVRPLLAHTREELRAYLRARGEAWREDPTNQDPALDRNFLRLFVFPLLEERFPAAKRALARFAEARAEEEGVLERQAEARLLPDPRFFVPAFRAAPLLEAPLAVRRRALRRLLEKLGLRPEARLVLLLEEALRGRPQTLPGGVLARRKGGTLFLLPPRPRLPLPPGFRRPAPGDYLERPSGRKRLVDFLAEKGVPRELKPLWPVRAEGSRVVEVLGLYPPPPEEAHMAEALAEAASAFREGEVPVGAVLVLPGRVLRAHNRVEGLRDPTAHAEMLLLREAGPEARGGRLYVTLEPCLMCHHALAQAGVEVVYGAENLKEGALTRFGLPTRARGGVRERECAKLLRDFFARLREGCRSG.

24 to 29 (SGGGDS) is a binding site for ATP. The region spanning 370 to 500 (PPEEAHMAEA…KLLRDFFARL (131 aa)) is the CMP/dCMP-type deaminase domain. Zn(2+) contacts are provided by His420, Cys445, and Cys448.

Belongs to the tRNA(Ile)-lysidine synthase family.

The protein localises to the cytoplasm. The catalysed reaction is cytidine(34) in tRNA(Ile2) + L-lysine + ATP = lysidine(34) in tRNA(Ile2) + AMP + diphosphate + H(+). Functionally, ligates lysine onto the cytidine present at position 34 of the AUA codon-specific tRNA(Ile) that contains the anticodon CAU, in an ATP-dependent manner. Cytidine is converted to lysidine, thus changing the amino acid specificity of the tRNA from methionine to isoleucine. The polypeptide is tRNA(Ile)-lysidine synthase (tilS) (Thermus thermophilus (strain ATCC BAA-163 / DSM 7039 / HB27)).